The following is a 290-amino-acid chain: Lipoyl synthase (290 aa).

Residues Cys-44, Cys-49, Cys-55, Cys-70, Cys-74, Cys-77, and Ser-282 each coordinate [4Fe-4S] cluster. Residues 56 to 271 form the Radical SAM core domain; it reads WGEGTATFMI…ELLGKEMGFR (216 aa).

The protein belongs to the radical SAM superfamily. Lipoyl synthase family. Requires [4Fe-4S] cluster as cofactor.

Its subcellular location is the cytoplasm. It carries out the reaction [[Fe-S] cluster scaffold protein carrying a second [4Fe-4S](2+) cluster] + N(6)-octanoyl-L-lysyl-[protein] + 2 oxidized [2Fe-2S]-[ferredoxin] + 2 S-adenosyl-L-methionine + 4 H(+) = [[Fe-S] cluster scaffold protein] + N(6)-[(R)-dihydrolipoyl]-L-lysyl-[protein] + 4 Fe(3+) + 2 hydrogen sulfide + 2 5'-deoxyadenosine + 2 L-methionine + 2 reduced [2Fe-2S]-[ferredoxin]. The protein operates within protein modification; protein lipoylation via endogenous pathway; protein N(6)-(lipoyl)lysine from octanoyl-[acyl-carrier-protein]: step 2/2. Its function is as follows. Catalyzes the radical-mediated insertion of two sulfur atoms into the C-6 and C-8 positions of the octanoyl moiety bound to the lipoyl domains of lipoate-dependent enzymes, thereby converting the octanoylated domains into lipoylated derivatives. This Flavobacterium psychrophilum (strain ATCC 49511 / DSM 21280 / CIP 103535 / JIP02/86) protein is Lipoyl synthase.